A 221-amino-acid polypeptide reads, in one-letter code: Adenylate kinase (221 aa).

An ATP-binding site is contributed by 10–15; sequence GAGKGT. Residues 30 to 59 are NMP; sequence STGDIFRQNLRDNTELGKLAKEYMDKGLLV. Residues T31, R36, 57–59, 85–88, and Q92 each bind AMP; these read LLV and GYPR. Residues 126–163 form an LID region; the sequence is GRRVCPVCGATYHIKTSPPKVDNVCDKCGSELIQRSDD. Residue R127 coordinates ATP. Zn(2+) is bound by residues C130 and C133. Residue 136–137 participates in ATP binding; sequence TY. Zn(2+) contacts are provided by C150 and C153. AMP contacts are provided by R160 and R171. K199 contributes to the ATP binding site.

Belongs to the adenylate kinase family. As to quaternary structure, monomer.

Its subcellular location is the cytoplasm. The catalysed reaction is AMP + ATP = 2 ADP. The protein operates within purine metabolism; AMP biosynthesis via salvage pathway; AMP from ADP: step 1/1. In terms of biological role, catalyzes the reversible transfer of the terminal phosphate group between ATP and AMP. Plays an important role in cellular energy homeostasis and in adenine nucleotide metabolism. The sequence is that of Adenylate kinase from Caldanaerobacter subterraneus subsp. tengcongensis (strain DSM 15242 / JCM 11007 / NBRC 100824 / MB4) (Thermoanaerobacter tengcongensis).